Reading from the N-terminus, the 568-residue chain is SLAIN motif-containing protein 1 (568 aa).

5 disordered regions span residues 1–22, 59–92, 139–162, 235–256, and 291–403; these read MMAE…SGPV, LLLL…TAAA, GGGP…SPPP, YTSR…STSE, and STSA…LRRS. Positions 21–56 form a coiled coil; the sequence is PVVNAELEVKKLQELVRKLEKQNEQLRSRAASAAAA. Positions 62 to 74 are enriched in pro residues; that stretch reads LPPPPPAAPPPAG. Residues 75–92 are compositionally biased toward low complexity; the sequence is LQPLGPRSPPAATATAAA. A compositionally biased stretch (gly residues) spans 139–149; it reads GGGPEPGGAGT. A compositionally biased stretch (polar residues) spans 235–245; that stretch reads YTSRGSPLSPQ. At Ser-243 the chain carries Phosphoserine. Composition is skewed to low complexity over residues 246 to 255 and 291 to 307; these read SSIDSELSTS and STSA…SLSS. Residues 316-329 show a composition bias toward acidic residues; that stretch reads QEYDQYSLEDEEEF. Residues 366–384 show a composition bias toward low complexity; that stretch reads SSQYFPSNNYQQQQYYSPQ. A compositionally biased stretch (polar residues) spans 385-395; sequence AQTPDQQPNRT. Residues Arg-471 and Arg-543 each carry the asymmetric dimethylarginine modification.

Belongs to the SLAIN motif-containing family. In terms of assembly, interacts with MAPRE1, MAPRE2, MAPRE3 and CKAP5. Interacts with ZDHHC17 (via ANK repeats). In terms of tissue distribution, expressed in embryonic stem cells. Expressed in brain.

It localises to the cytoplasm. It is found in the cytoskeleton. Functionally, microtubule plus-end tracking protein that might be involved in the regulation of cytoplasmic microtubule dynamics, microtubule organization and microtubule elongation. The protein is SLAIN motif-containing protein 1 (SLAIN1) of Homo sapiens (Human).